The sequence spans 106 residues: MNSFMTVGLGHYLAVAAVLLVLGIFGIFLNRKNVIVMLMSIELILLAVNLNMVAFSASLGDLAGQVFAMFILTVAAAEAAIGLAILVIYFRNRGSIQVEDVNLMKG.

The next 3 helical transmembrane spans lie at 9–29, 35–55, and 70–90; these read LGHY…GIFL, IVML…MVAF, and FILT…VIYF.

It belongs to the complex I subunit 4L family. In terms of assembly, NDH-1 is composed of 14 different subunits. Subunits NuoA, H, J, K, L, M, N constitute the membrane sector of the complex.

It localises to the cell inner membrane. It catalyses the reaction a quinone + NADH + 5 H(+)(in) = a quinol + NAD(+) + 4 H(+)(out). Its function is as follows. NDH-1 shuttles electrons from NADH, via FMN and iron-sulfur (Fe-S) centers, to quinones in the respiratory chain. The immediate electron acceptor for the enzyme in this species is believed to be ubiquinone. Couples the redox reaction to proton translocation (for every two electrons transferred, four hydrogen ions are translocated across the cytoplasmic membrane), and thus conserves the redox energy in a proton gradient. In Granulibacter bethesdensis (strain ATCC BAA-1260 / CGDNIH1), this protein is NADH-quinone oxidoreductase subunit K.